The sequence spans 143 residues: Putative pre-16S rRNA nuclease (143 aa).

The protein belongs to the YqgF nuclease family.

It is found in the cytoplasm. Its function is as follows. Could be a nuclease involved in processing of the 5'-end of pre-16S rRNA. In Lactococcus lactis subsp. cremoris (strain MG1363), this protein is Putative pre-16S rRNA nuclease.